The following is a 404-amino-acid chain: Growth/differentiation factor 6-A (404 aa).

A signal peptide spans 1–24 (MDALRAVAFYALFVFLWSLPCCQS). Positions 25–284 (AALISQKRSK…LQFKARRRRR (260 aa)) are excised as a propeptide. An N-linked (GlcNAc...) asparagine glycan is attached at Asn91. Residues 263 to 304 (KSRGDDDEEESALQFKARRRRRTALNNRHGKRHGKKSKSRCS) form a disordered region. Residues 278-304 (KARRRRRTALNNRHGKRHGKKSKSRCS) show a composition bias toward basic residues. Cystine bridges form between Cys303/Cys369, Cys332/Cys401, and Cys336/Cys403.

Belongs to the TGF-beta family. In terms of assembly, homodimer; disulfide-linked. As to expression, first expressed in late gastrula stage embryos (9.5 hours post fertilization (hpf)) in anterior neuroectoderm corresponding to the future dorsal part of the brain. Shortly after tailbud formation (11 hpf), expression expands to the entire neural region and is subsequently expressed in derivatives of the lateral neural plate and migrating neural crest cells, with the future midbrain and hindbrain showing strong expression. Also expressed weakly and transiently in the posterior embryo from 11.5 hpf to 15 hpf in the lateral mesoderm, and in ectoderm above the neural keel. At 14 hpf, expressed along the entire length of the embryo and starting around the 16-somite stage, expressed in the dorsal quadrant of the retina, representing the distal tip of the eye anlage. At this stage, also expressed in the hatching gland and the hypochord. At 24 hpf, expressed in the roof plate outlining the fourth brain ventricle, in the posterior hypochord, the primitive gut endoderm, the ventral tail mesenchyme, the dorsal part of the neural tube and the dorsal fin. Weakly expressed in the dorsal part of the posterior spinal cord and in blood cell precursors.

The protein localises to the secreted. Its function is as follows. Growth factor that controls proliferation and cellular differentiation in the retina. Plays a key role in regulating apoptosis during retinal development. Establishes dorsal-ventral positional information in the retina and controls the formation of the retinotectal map. Functions maternally in dorsal/ventral patterning to induce the expression of the zygotic bmp2b and bmp4 genes and ventralize embryos. Zygotic expression does not appear to regulate axis specification, but instead functions to establish the integrity of the axial vessels during embryonic development. May be involved in maintaining the identity of cells of the dorsal-most neural tube and of at least a subset of neural crest cells. In Danio rerio (Zebrafish), this protein is Growth/differentiation factor 6-A (gdf6a).